We begin with the raw amino-acid sequence, 331 residues long: UDP-GalNAc:beta-1,3-N-acetylgalactosaminyltransferase 1 (331 aa).

The Cytoplasmic portion of the chain corresponds to 1-20 (MAPALPITLPSKMSLRSLKW). Residues 21-43 (SLLLLSLLSFLVMWYLSLPHYNV) form a helical; Signal-anchor for type II membrane protein membrane-spanning segment. Residues 44–331 (IERVNWMYFY…VMLRNTTCHY (288 aa)) are Lumenal-facing. N-linked (GlcNAc...) asparagine glycosylation is found at asparagine 72, asparagine 154, asparagine 198, asparagine 212, and asparagine 326.

This sequence belongs to the glycosyltransferase 31 family. Requires Mg(2+) as cofactor.

It is found in the golgi apparatus membrane. It catalyses the reaction a globoside Gb3Cer (d18:1(4E)) + UDP-N-acetyl-alpha-D-galactosamine = a globoside Gb4Cer (d18:1(4E)) + UDP + H(+). The protein operates within protein modification; protein glycosylation. Transfers N-acetylgalactosamine onto globotriaosylceramide. Plays a critical role in preimplantation stage embryonic development. This Sus scrofa (Pig) protein is UDP-GalNAc:beta-1,3-N-acetylgalactosaminyltransferase 1 (B3GALNT1).